Reading from the N-terminus, the 322-residue chain is Beta-ketoacyl-[acyl-carrier-protein] synthase III (322 aa).

Active-site residues include Cys112 and His249. An ACP-binding region spans residues Gln250–Arg254. The active site involves Asn279.

It belongs to the thiolase-like superfamily. FabH family. Homodimer.

It is found in the cytoplasm. It carries out the reaction malonyl-[ACP] + acetyl-CoA + H(+) = 3-oxobutanoyl-[ACP] + CO2 + CoA. It functions in the pathway lipid metabolism; fatty acid biosynthesis. Functionally, catalyzes the condensation reaction of fatty acid synthesis by the addition to an acyl acceptor of two carbons from malonyl-ACP. Catalyzes the first condensation reaction which initiates fatty acid synthesis and may therefore play a role in governing the total rate of fatty acid production. Possesses both acetoacetyl-ACP synthase and acetyl transacylase activities. Its substrate specificity determines the biosynthesis of branched-chain and/or straight-chain of fatty acids. The polypeptide is Beta-ketoacyl-[acyl-carrier-protein] synthase III (Caulobacter vibrioides (strain ATCC 19089 / CIP 103742 / CB 15) (Caulobacter crescentus)).